A 331-amino-acid polypeptide reads, in one-letter code: Glycerophosphodiester phosphodiesterase 1 (331 aa).

The Cytoplasmic segment spans residues 1–3 (MWL). Residues 4 to 24 (WEDQGGLLGPFSFVLVLLLVV) form a helical membrane-spanning segment. Over 25-248 (TRSPFNACVL…PRYSVFWKQS (224 aa)) the chain is Lumenal. The 267-residue stretch at 65-331 (VSAIAHRGGS…SMLEDCAPHF (267 aa)) folds into the GP-PDE domain. 2 residues coordinate Mg(2+): glutamate 97 and aspartate 99. Asparagine 168 carries N-linked (GlcNAc...) asparagine glycosylation. Aspartate 174 provides a ligand contact to Mg(2+). A helical membrane pass occupies residues 249–269 (VFVVLDILLDWSMHNVLWYLC). Residues 270 to 331 (GISAFLMQKD…SMLEDCAPHF (62 aa)) are Cytoplasmic-facing.

Belongs to the glycerophosphoryl diester phosphodiesterase family. Interacts with PRAF2. Interacts with RGS16. Requires Mg(2+) as cofactor. In terms of processing, N-glycosylated. Widely expressed. Highly expressed in the brain and spinal cord, followed by kidney, liver, and testis. In contrast, little or no expression is detected in the heart or spleen.

Its subcellular location is the cell membrane. It localises to the cytoplasmic vesicle membrane. The catalysed reaction is sn-glycero-3-phospho-1D-myo-inositol + H2O = myo-inositol + sn-glycerol 3-phosphate + H(+). It catalyses the reaction 1-O-(1Z-octadecenyl)-sn-glycero-3-phospho-(N-5Z,8Z,11Z,14Z-eicosatetraenoyl)-ethanolamine + H2O = 1-O-(1Z-octadecenyl)-sn-glycero-3-phosphate + N-(5Z,8Z,11Z,14Z-eicosatetraenoyl)-ethanolamine + H(+). The enzyme catalyses 1-O-(1Z-octadecenyl)-sn-glycero-3-phospho-(N-9Z-octadecenoyl)-ethanolamine + H2O = 1-O-(1Z-octadecenyl)-sn-glycero-3-phosphate + N-(9Z-octadecenoyl) ethanolamine + H(+). It carries out the reaction 1-O-(1Z-octadecenyl)-sn-glycero-3-phospho-N-hexadecanoyl-ethanolamine + H2O = 1-O-(1Z-octadecenyl)-sn-glycero-3-phosphate + N-hexadecanoylethanolamine + H(+). The catalysed reaction is N-(4Z,7Z,10Z,13Z,16Z,19Z)-docosahexaenoyl-sn-glycero-3-phosphoethanolamine + H2O = N-(4Z,7Z,10Z,13Z,16Z,19Z)-docosahexaenoyl ethanolamine + sn-glycerol 3-phosphate + H(+). It catalyses the reaction N-eicosanoyl-sn-glycero-3-phosphoethanolamine + H2O = N-eicosanoyl ethanolamine + sn-glycerol 3-phosphate + H(+). The enzyme catalyses N-hexadecanoyl-sn-glycero-3-phosphoethanolamine + H2O = N-hexadecanoylethanolamine + sn-glycerol 3-phosphate + H(+). It carries out the reaction N-(9Z-octadecenoyl)-sn-glycero-3-phosphoethanolamine + H2O = N-(9Z-octadecenoyl) ethanolamine + sn-glycerol 3-phosphate + H(+). The catalysed reaction is N-(5Z,8Z,11Z,14Z-eicosatetraenoyl)-sn-glycero-3-phosphoethanolamine + H2O = N-(5Z,8Z,11Z,14Z-eicosatetraenoyl)-ethanolamine + sn-glycerol 3-phosphate + H(+). With respect to regulation, inhibited by EDTA, calcium chloride, and zinc chloride. Enhanced by magnesium chloride. Glycerophosphodiester phosphodiesterase activity can be modulated by G-protein signaling pathways. Its function is as follows. Hydrolyzes the phosphodiester bond of glycerophosphodiesters such as glycerophosphoinositol (GroPIns) and glycerophosphoethanolamine (GroPEth), to yield a glycerol phosphate and an alcohol. Hydrolyzes glycerophospho-N-acylethanolamines to N-acylethanolamines in the brain and participates in bioactive N-acylethanolamine biosynthesis such as anandamide (an endocannabinoid), N-palmitoylethanolamine (an anti-inflammatory), and N-oleoylethanolamine (an anorexic). In addition, has a lysophospholipase D activity by hydrolyzing N-acyl-lysoplasmenylethanolamine (N-acyl-lysoPlsEt) to N-acylethanolamine. However lysophospholipase D activity is lower than glycerophosphodiester phosphodiesterase activity. Has little or no activity towards glycerophosphocholine. This is Glycerophosphodiester phosphodiesterase 1 from Mus musculus (Mouse).